Here is a 531-residue protein sequence, read N- to C-terminus: Beta-hexosaminidase subunit beta (531 aa).

An N-terminal signal peptide occupies residues 1–24; that stretch reads MRHRGLGLAALLALLAAVAPRSSA. An N-linked (GlcNAc...) asparagine glycan is attached at Asn-50. The cysteines at positions 65 and 111 are disulfide-linked. Residues Asn-116, Asn-164, and Asn-301 are each glycosylated (N-linked (GlcNAc...) asparagine). Cystine bridges form between Cys-283/Cys-334 and Cys-508/Cys-525. Residue Glu-329 is the Proton donor of the active site.

It belongs to the glycosyl hydrolase 20 family. There are 3 forms of beta-hexosaminidase: hexosaminidase A is a heterodimer composed of one subunit alpha and one subunit beta (chain A and B); hexosaminidase B is a homodimer of two beta subunits (two chains A and B); hexosaminidase S is a homodimer of two alpha subunits. The composition of the dimer (isozyme A versus isozyme S) has a significant effect on the substrate specificity of the alpha subunit active site.

The protein resides in the lysosome. Its subcellular location is the cytoplasmic vesicle. It localises to the secretory vesicle. The protein localises to the cortical granule. The enzyme catalyses Hydrolysis of terminal non-reducing N-acetyl-D-hexosamine residues in N-acetyl-beta-D-hexosaminides.. The catalysed reaction is N-acetyl-beta-D-galactosaminyl-(1-&gt;4)-beta-D-3-sulfogalactosyl-(1-&gt;4)-beta-D-glucosyl-(1&lt;-&gt;1')-ceramide + H2O = a beta-D-3-sulfogalactosyl-(1-&gt;4)-beta-D-glucosyl-(1&lt;-&gt;1')-ceramide + N-acetyl-beta-D-galactosamine. It catalyses the reaction a ganglioside GM2 (d18:1(4E)) + H2O = a ganglioside GM3 (d18:1(4E)) + N-acetyl-beta-D-galactosamine. It carries out the reaction a ganglioside GM2 + H2O = a ganglioside GM3 + N-acetyl-beta-D-galactosamine. The enzyme catalyses beta-D-GalNAc-(1-&gt;4)-alpha-L-IdoA-(1-&gt;3)-beta-D-GalNAc-4-sulfate-(1-&gt;4)-alpha-L-IdoA-(1-&gt;3)-D-GalNAc-4-sulfate + H2O = alpha-L-IdoA-(1-&gt;3)-beta-D-GalNAc-4-sulfate-(1-&gt;4)-alpha-L-IdoA-(1-&gt;3)-D-GalNAc-4-sulfate + N-acetyl-D-galactosamine. The catalysed reaction is N-acetyl-beta-D-6-sulfogalactosaminyl-(1-&gt;4)-alpha-L-iduronyl-(1-&gt;3)-N-acetyl-D-6-sulfogalactosamine + H2O = alpha-L-iduronyl-(1-&gt;3)-N-acetyl-D-6-sulfogalactosamine + N-acetyl-D-6-sulfogalactosamine. Addition of GM2A stimulates the hydrolysis of sulfated glycosphingolipid SM2 and the ganglioside GM2. Hydrolyzes the non-reducing end N-acetyl-D-hexosamine and/or sulfated N-acetyl-D-hexosamine of glycoconjugates, such as the oligosaccharide moieties from proteins and neutral glycolipids, or from certain mucopolysaccharides. The isozyme B does not hydrolyze each of these substrates, however hydrolyzes efficiently neutral oligosaccharide. Only the isozyme A is responsible for the degradation of GM2 gangliosides in the presence of GM2A. During fertilization is responsible, at least in part, for the zona block to polyspermy. Present in the cortical granules of non-activated oocytes, is exocytosed during the cortical reaction in response to oocyte activation and inactivates the sperm galactosyltransferase-binding site, accounting for the block in sperm binding to the zona pellucida. The chain is Beta-hexosaminidase subunit beta from Felis catus (Cat).